We begin with the raw amino-acid sequence, 790 residues long: Alpha,alpha-trehalose-phosphate synthase [UDP-forming] B (790 aa).

The protein in the N-terminal section; belongs to the glycosyltransferase 20 family. It in the C-terminal section; belongs to the trehalose phosphatase family.

The catalysed reaction is D-glucose 6-phosphate + UDP-alpha-D-glucose = alpha,alpha-trehalose 6-phosphate + UDP + H(+). In terms of biological role, synthesizes trehalose 6-phosphate, the precursor for the production of trehalose, the main carbohydrate storage reserve of the dormant spore. Trehalose accumulates in both prestalk and prespore cells and then is rapidly metabolized during terminal differentiation of stalk cells, while being stored in spores, where it serves as the principal energy and carbon source for germination. This is Alpha,alpha-trehalose-phosphate synthase [UDP-forming] B (tpsB) from Dictyostelium discoideum (Social amoeba).